The primary structure comprises 880 residues: Valine--tRNA ligase (880 aa).

Residues 49–59 (PNVTGKLHLGH) carry the 'HIGH' region motif. The 'KMSKS' region signature appears at 525-529 (KMSKS). K528 is a binding site for ATP. Residues 809 to 880 (LEGLINIEEE…VKARLAELKR (72 aa)) are a coiled coil.

Belongs to the class-I aminoacyl-tRNA synthetase family. ValS type 1 subfamily. As to quaternary structure, monomer.

Its subcellular location is the cytoplasm. The enzyme catalyses tRNA(Val) + L-valine + ATP = L-valyl-tRNA(Val) + AMP + diphosphate. Functionally, catalyzes the attachment of valine to tRNA(Val). As ValRS can inadvertently accommodate and process structurally similar amino acids such as threonine, to avoid such errors, it has a 'posttransfer' editing activity that hydrolyzes mischarged Thr-tRNA(Val) in a tRNA-dependent manner. The sequence is that of Valine--tRNA ligase (valS) from Geobacillus stearothermophilus (Bacillus stearothermophilus).